Reading from the N-terminus, the 353-residue chain is ATP-dependent kinase YFH7 (353 aa).

G31–T39 contributes to the ATP binding site.

This sequence belongs to the YFH7 family.

Its function is as follows. ATP-dependent kinase that could be involved in endoplasmic reticulum membrane assembly. This chain is ATP-dependent kinase YFH7 (YFH7), found in Saccharomyces cerevisiae (strain Lalvin EC1118 / Prise de mousse) (Baker's yeast).